The primary structure comprises 388 residues: Succinyl-diaminopimelate desuccinylase (388 aa).

His-72 contacts Zn(2+). Residue Asp-74 is part of the active site. Asp-105 lines the Zn(2+) pocket. Glu-139 serves as the catalytic Proton acceptor. Zn(2+)-binding residues include Glu-140, Glu-168, and His-353.

Belongs to the peptidase M20A family. DapE subfamily. Homodimer. It depends on Zn(2+) as a cofactor. Requires Co(2+) as cofactor.

It catalyses the reaction N-succinyl-(2S,6S)-2,6-diaminopimelate + H2O = (2S,6S)-2,6-diaminopimelate + succinate. It functions in the pathway amino-acid biosynthesis; L-lysine biosynthesis via DAP pathway; LL-2,6-diaminopimelate from (S)-tetrahydrodipicolinate (succinylase route): step 3/3. In terms of biological role, catalyzes the hydrolysis of N-succinyl-L,L-diaminopimelic acid (SDAP), forming succinate and LL-2,6-diaminopimelate (DAP), an intermediate involved in the bacterial biosynthesis of lysine and meso-diaminopimelic acid, an essential component of bacterial cell walls. This is Succinyl-diaminopimelate desuccinylase from Orientia tsutsugamushi (strain Boryong) (Rickettsia tsutsugamushi).